The chain runs to 92 residues: uncharacterized protein (92 aa).

This is an uncharacterized protein from Mycobacterium tuberculosis (strain CDC 1551 / Oshkosh).